A 376-amino-acid chain; its full sequence is Transcription factor TEOSINTE BRANCHED 1 (376 aa).

The TCP domain occupies 114 to 172 (RKDRHSKICTAGGMRDRRMRLSLDVARKFFALQDMLGFDKASKTVQWLLNTSKSAIQEI). Disordered regions lie at residues 179 to 266 (SECV…KHRM) and 280 to 299 (AAAS…HHSS). Basic and acidic residues-rich tracts occupy residues 207-219 (QKPK…EGKK) and 243-261 (VPDK…ERTK). Residues 246 to 263 (KETRAKARERARERTKEK) form the R domain. Low complexity predominate over residues 290-299 (SSNNLSHHSS).

As to expression, expressed in axillary inflorescence primordia, immature internodes below these primordia, and immature husk surrounding these primordia.

It is found in the nucleus. Its function is as follows. Transcription factor. Involved in apical dominance. Represses the growth of axillary organs (e.g. lateral branches), but enables the formation of female inflorescences. Regulates the number and length of axillary branches. The sequence is that of Transcription factor TEOSINTE BRANCHED 1 (TB1) from Zea mays (Maize).